We begin with the raw amino-acid sequence, 162 residues long: Ubiquitin-fold modifier-conjugating enzyme 1 (162 aa).

The active-site Glycyl thioester intermediate is the cysteine 115.

It belongs to the ubiquitin-conjugating enzyme family. UFC1 subfamily. As to quaternary structure, interacts with uba-5. In terms of tissue distribution, expressed in the intestine.

In terms of biological role, E2-like enzyme which forms an intermediate with ufm-1. The intermediate is formed via a thioester linkage. This chain is Ubiquitin-fold modifier-conjugating enzyme 1, found in Caenorhabditis elegans.